A 436-amino-acid polypeptide reads, in one-letter code: Ribosomal protein uS12 methylthiotransferase RimO (436 aa).

Residues 4-122 (KRIDIITLGC…LLQDLGKTYH (119 aa)) form the MTTase N-terminal domain. 6 residues coordinate [4Fe-4S] cluster: C13, C51, C85, C146, C150, and C153. Positions 132–363 (TTPKHYAYLK…MDIQQGISAE (232 aa)) constitute a Radical SAM core domain. The TRAM domain maps to 366 to 433 (AAKIGQQMKV…DFDLYAKILN (68 aa)).

The protein belongs to the methylthiotransferase family. RimO subfamily. [4Fe-4S] cluster is required as a cofactor.

It localises to the cytoplasm. The catalysed reaction is L-aspartate(89)-[ribosomal protein uS12]-hydrogen + (sulfur carrier)-SH + AH2 + 2 S-adenosyl-L-methionine = 3-methylsulfanyl-L-aspartate(89)-[ribosomal protein uS12]-hydrogen + (sulfur carrier)-H + 5'-deoxyadenosine + L-methionine + A + S-adenosyl-L-homocysteine + 2 H(+). Functionally, catalyzes the methylthiolation of an aspartic acid residue of ribosomal protein uS12. The protein is Ribosomal protein uS12 methylthiotransferase RimO of Bacteroides thetaiotaomicron (strain ATCC 29148 / DSM 2079 / JCM 5827 / CCUG 10774 / NCTC 10582 / VPI-5482 / E50).